A 356-amino-acid polypeptide reads, in one-letter code: S-adenosylmethionine:tRNA ribosyltransferase-isomerase (356 aa).

The protein belongs to the QueA family. Monomer.

The protein resides in the cytoplasm. It carries out the reaction 7-aminomethyl-7-carbaguanosine(34) in tRNA + S-adenosyl-L-methionine = epoxyqueuosine(34) in tRNA + adenine + L-methionine + 2 H(+). Its pathway is tRNA modification; tRNA-queuosine biosynthesis. Transfers and isomerizes the ribose moiety from AdoMet to the 7-aminomethyl group of 7-deazaguanine (preQ1-tRNA) to give epoxyqueuosine (oQ-tRNA). The chain is S-adenosylmethionine:tRNA ribosyltransferase-isomerase from Citrobacter koseri (strain ATCC BAA-895 / CDC 4225-83 / SGSC4696).